Here is a 533-residue protein sequence, read N- to C-terminus: (E)-beta-farnesene synthase (533 aa).

The Mg(2+) site is built by Asp286, Asp290, Asn430, Ser434, and Glu438. Positions 286–290 match the DDXXD motif motif; sequence DDMMD.

The protein belongs to the terpene synthase family. Mg(2+) is required as a cofactor. Co(2+) serves as cofactor. Requires Mn(2+) as cofactor.

It is found in the cytoplasm. It carries out the reaction (2E,6E)-farnesyl diphosphate = (E)-beta-farnesene + diphosphate. It participates in secondary metabolite biosynthesis; terpenoid biosynthesis. Its function is as follows. Sesquiterpene cyclase catalyzing the production of sixfold more beta-farnesene than alpha-bergamotene from farnesyl diphosphate. Involved in indirect defense by producing volatile signals attracting natural enemies of herbivores. This is (E)-beta-farnesene synthase from Zea perennis (Perennial teosinte).